The sequence spans 126 residues: uncharacterized protein (126 aa).

Helical transmembrane passes span 40 to 57 (IDKW…VSFF) and 72 to 94 (ILIA…ILGG).

The protein resides in the cell membrane. This is an uncharacterized protein from Pasteurella multocida (strain Pm70).